Here is a 521-residue protein sequence, read N- to C-terminus: Fucosyltransferase 3 (521 aa).

Residues 1-12 (MKRGKKNSDAGD) are compositionally biased toward basic and acidic residues. The tract at residues 1 to 29 (MKRGKKNSDAGDRLTNSDTRTGSSELNAM) is disordered. Residues 1-39 (MKRGKKNSDAGDRLTNSDTRTGSSELNAMMKPSLSSMKT) lie on the Cytoplasmic side of the membrane. Over residues 14 to 26 (LTNSDTRTGSSEL) the composition is skewed to polar residues. A helical; Signal-anchor for type II membrane protein membrane pass occupies residues 40-60 (MGLLLAVLMVASVMFSLSVVL). Over 61 to 521 (RDPPSDDVIE…QATLFHGCKD (461 aa)) the chain is Lumenal. Asn-152, Asn-222, and Asn-493 each carry an N-linked (GlcNAc...) asparagine glycan.

It belongs to the glycosyltransferase 37 family. In terms of tissue distribution, expressed in roots, stems, leaves, flowers, siliques and seedlings.

Its subcellular location is the golgi apparatus. It localises to the golgi stack membrane. The protein operates within protein modification; protein glycosylation. Its function is as follows. May be involved in cell wall biosynthesis. May act as a fucosyltransferase. The chain is Fucosyltransferase 3 (FUT3) from Arabidopsis thaliana (Mouse-ear cress).